The sequence spans 1616 residues: Vitellogenin-1 (1616 aa).

The signal sequence occupies residues 1 to 19 (MRSIIIASIVALAIAFSPA). Positions 24–689 (FEPKIDYHYK…EKNSFLLKDL (666 aa)) constitute a Vitellogenin domain. A glycan (N-linked (GlcNAc...) asparagine) is linked at N1270. Positions 1310–1479 (SVCKVQKNQI…SYLLKNEECE (170 aa)) constitute a VWFD domain. 2 disulfides stabilise this stretch: C1312–C1442 and C1334–C1478. Acidic residues predominate over residues 1505–1514 (SFEETYDYEQ). The segment at 1505–1531 (SFEETYDYEQENTNKKQKNQRSQKKSD) is disordered.

In terms of tissue distribution, expressed in the intestine of adult hermaphrodites.

It is found in the secreted. Its function is as follows. Precursor of the egg-yolk proteins that are sources of nutrients during embryonic development. Together with other vitellogenins, may play a role in modulating life-span, acting via induction of autophagy and lysosomal lipolysis. This chain is Vitellogenin-1 (vit-1), found in Caenorhabditis elegans.